Reading from the N-terminus, the 371-residue chain is Succinyl-diaminopimelate desuccinylase (371 aa).

His68 is a binding site for Zn(2+). Asp70 is a catalytic residue. Position 99 (Asp99) interacts with Zn(2+). Glu130 acts as the Proton acceptor in catalysis. Residues Glu131, Glu159, and His344 each coordinate Zn(2+).

This sequence belongs to the peptidase M20A family. DapE subfamily. Homodimer. Zn(2+) is required as a cofactor. Co(2+) serves as cofactor.

It catalyses the reaction N-succinyl-(2S,6S)-2,6-diaminopimelate + H2O = (2S,6S)-2,6-diaminopimelate + succinate. It participates in amino-acid biosynthesis; L-lysine biosynthesis via DAP pathway; LL-2,6-diaminopimelate from (S)-tetrahydrodipicolinate (succinylase route): step 3/3. Catalyzes the hydrolysis of N-succinyl-L,L-diaminopimelic acid (SDAP), forming succinate and LL-2,6-diaminopimelate (DAP), an intermediate involved in the bacterial biosynthesis of lysine and meso-diaminopimelic acid, an essential component of bacterial cell walls. The chain is Succinyl-diaminopimelate desuccinylase from Acidiphilium cryptum (strain JF-5).